The primary structure comprises 557 residues: Formate--tetrahydrofolate ligase (557 aa).

65–72 (TPAGEGKT) is a binding site for ATP.

This sequence belongs to the formate--tetrahydrofolate ligase family.

It carries out the reaction (6S)-5,6,7,8-tetrahydrofolate + formate + ATP = (6R)-10-formyltetrahydrofolate + ADP + phosphate. The protein operates within one-carbon metabolism; tetrahydrofolate interconversion. This Methylorubrum extorquens (strain CM4 / NCIMB 13688) (Methylobacterium extorquens) protein is Formate--tetrahydrofolate ligase.